The sequence spans 339 residues: Cathepsin B (339 aa).

Positions 1-17 (MWQLWASLCCLLVLANA) are cleaved as a signal peptide. Positions 18-79 (RSRPSFHPLS…QRVMFTEDLK (62 aa)) are cleaved as a propeptide — activation peptide. 6 disulfides stabilise this stretch: Cys93-Cys122, Cys105-Cys150, Cys141-Cys207, Cys142-Cys146, Cys179-Cys211, and Cys187-Cys198. Residue Cys108 is part of the active site. Asn192 carries an N-linked (GlcNAc...) asparagine glycan. Lys220 is modified (N6-acetyllysine). Residues His278 and Asn298 contribute to the active site. Residues 334–339 (QYWEKI) constitute a propeptide that is removed on maturation.

It belongs to the peptidase C1 family. Dimer of a heavy chain and a light chain cross-linked by a disulfide bond. Interacts with SRPX2. Directly interacts with SHKBP1. Expressed in the stratum spinosum of the epidermis. Weak expression is detected in the stratum granulosum.

Its subcellular location is the lysosome. It is found in the melanosome. The protein localises to the secreted. The protein resides in the extracellular space. It localises to the apical cell membrane. The catalysed reaction is Hydrolysis of proteins with broad specificity for peptide bonds. Preferentially cleaves -Arg-Arg-|-Xaa bonds in small molecule substrates (thus differing from cathepsin L). In addition to being an endopeptidase, shows peptidyl-dipeptidase activity, liberating C-terminal dipeptides.. With respect to regulation, inhibited by leupeptin. In terms of biological role, thiol protease which is believed to participate in intracellular degradation and turnover of proteins. Cleaves matrix extracellular phosphoglycoprotein MEPE. Involved in the solubilization of cross-linked TG/thyroglobulin in the thyroid follicle lumen. Has also been implicated in tumor invasion and metastasis. This is Cathepsin B (CTSB) from Homo sapiens (Human).